A 348-amino-acid chain; its full sequence is D-erythrose-4-phosphate dehydrogenase (348 aa).

Residues 12–13 (RI) and Arg81 each bind NAD(+). Residues 154–156 (SCT), Arg200, 213–214 (TK), and Arg236 each bind substrate. Cys155 functions as the Nucleophile in the catalytic mechanism. Residue Asn318 participates in NAD(+) binding.

It belongs to the glyceraldehyde-3-phosphate dehydrogenase family. Epd subfamily. As to quaternary structure, homotetramer.

The protein localises to the cytoplasm. It catalyses the reaction D-erythrose 4-phosphate + NAD(+) + H2O = 4-phospho-D-erythronate + NADH + 2 H(+). The protein operates within cofactor biosynthesis; pyridoxine 5'-phosphate biosynthesis; pyridoxine 5'-phosphate from D-erythrose 4-phosphate: step 1/5. Catalyzes the NAD-dependent conversion of D-erythrose 4-phosphate to 4-phosphoerythronate. In Salmonella dublin (strain CT_02021853), this protein is D-erythrose-4-phosphate dehydrogenase.